Reading from the N-terminus, the 342-residue chain is GTPase Obg (342 aa).

Positions 1–159 constitute an Obg domain; the sequence is MQFIDQAQIE…KLLRLELKLL (159 aa). An OBG-type G domain is found at 160–330; it reads AEVGIIGLPN…MLQEVWGILD (171 aa). GTP is bound by residues 166-173, 191-195, 213-216, 280-283, and 311-313; these read GLPNAGKS, FTTLI, DIPG, NKID, and SAV. The Mg(2+) site is built by S173 and T193.

The protein belongs to the TRAFAC class OBG-HflX-like GTPase superfamily. OBG GTPase family. As to quaternary structure, monomer. Mg(2+) serves as cofactor.

It localises to the cytoplasm. An essential GTPase which binds GTP, GDP and possibly (p)ppGpp with moderate affinity, with high nucleotide exchange rates and a fairly low GTP hydrolysis rate. Plays a role in control of the cell cycle, stress response, ribosome biogenesis and in those bacteria that undergo differentiation, in morphogenesis control. This is GTPase Obg from Nostoc sp. (strain PCC 7120 / SAG 25.82 / UTEX 2576).